Here is a 446-residue protein sequence, read N- to C-terminus: Bifunctional protein GlmU (446 aa).

Residues 1–229 (MTEKPVALIV…EAETLGINTR (229 aa)) form a pyrophosphorylase region. UDP-N-acetyl-alpha-D-glucosamine-binding positions include 11-14 (LAAG), Lys-25, Gln-78, 83-84 (GT), 106-108 (YGD), Gly-141, Glu-155, Asn-170, and Asn-227. Asp-108 is a Mg(2+) binding site. Residue Asn-227 coordinates Mg(2+). A linker region spans residues 230-250 (AELAAAEAAFQVRARARALED). An N-acetyltransferase region spans residues 251 to 446 (GVTMTDPATV…MQALRQKKGN (196 aa)). UDP-N-acetyl-alpha-D-glucosamine contacts are provided by Arg-316 and Lys-334. His-346 functions as the Proton acceptor in the catalytic mechanism. Residues Tyr-349 and Asn-360 each coordinate UDP-N-acetyl-alpha-D-glucosamine. Acetyl-CoA-binding positions include Ala-363, 369 to 370 (NY), Ser-388, Ser-406, and Arg-423.

In the N-terminal section; belongs to the N-acetylglucosamine-1-phosphate uridyltransferase family. The protein in the C-terminal section; belongs to the transferase hexapeptide repeat family. In terms of assembly, homotrimer. Mg(2+) serves as cofactor.

The protein resides in the cytoplasm. It catalyses the reaction alpha-D-glucosamine 1-phosphate + acetyl-CoA = N-acetyl-alpha-D-glucosamine 1-phosphate + CoA + H(+). It carries out the reaction N-acetyl-alpha-D-glucosamine 1-phosphate + UTP + H(+) = UDP-N-acetyl-alpha-D-glucosamine + diphosphate. It participates in nucleotide-sugar biosynthesis; UDP-N-acetyl-alpha-D-glucosamine biosynthesis; N-acetyl-alpha-D-glucosamine 1-phosphate from alpha-D-glucosamine 6-phosphate (route II): step 2/2. The protein operates within nucleotide-sugar biosynthesis; UDP-N-acetyl-alpha-D-glucosamine biosynthesis; UDP-N-acetyl-alpha-D-glucosamine from N-acetyl-alpha-D-glucosamine 1-phosphate: step 1/1. It functions in the pathway bacterial outer membrane biogenesis; LPS lipid A biosynthesis. Functionally, catalyzes the last two sequential reactions in the de novo biosynthetic pathway for UDP-N-acetylglucosamine (UDP-GlcNAc). The C-terminal domain catalyzes the transfer of acetyl group from acetyl coenzyme A to glucosamine-1-phosphate (GlcN-1-P) to produce N-acetylglucosamine-1-phosphate (GlcNAc-1-P), which is converted into UDP-GlcNAc by the transfer of uridine 5-monophosphate (from uridine 5-triphosphate), a reaction catalyzed by the N-terminal domain. The sequence is that of Bifunctional protein GlmU from Paracoccus denitrificans (strain Pd 1222).